The chain runs to 88 residues: Small ribosomal subunit protein bS20 (88 aa).

It belongs to the bacterial ribosomal protein bS20 family.

Binds directly to 16S ribosomal RNA. In Brucella abortus (strain S19), this protein is Small ribosomal subunit protein bS20.